A 251-amino-acid polypeptide reads, in one-letter code: Derlin-1 (251 aa).

Residue serine 2 is modified to N-acetylserine. At 2 to 15 the chain is on the cytoplasmic side; the sequence is SDIGDWFRSIPTIT. Residues 16–31 form a helical membrane-spanning segment; that stretch reads RYWFAATVAVPLVGKL. Over 32-69 the chain is Lumenal; that stretch reads GLISPAYFFLWPEAFLYRFQIWRPITATFYFPVGPGTG. A helical transmembrane segment spans residues 70–89; the sequence is FLYLVNLYFLYQYSTRLETG. Over 90-94 the chain is Cytoplasmic; that stretch reads AFDGR. A helical transmembrane segment spans residues 95–115; that stretch reads PADYLFMLLFNWICIVITGLA. Topologically, residues 116–122 are lumenal; the sequence is MDMQLLM. Residues 123 to 137 traverse the membrane as a helical segment; that stretch reads IPLIMSVLYVWAQLN. Residues 138 to 154 are Cytoplasmic-facing; that stretch reads RDMIVSFWFGTRFKACY. The chain crosses the membrane as a helical span at residues 155–166; the sequence is LPWVILGFNYII. The Lumenal portion of the chain corresponds to 167 to 170; it reads GGSV. The chain crosses the membrane as a helical span at residues 171–189; it reads INELIGNLVGHLYFFLMFR. At 190–251 the chain is on the cytoplasmic side; the sequence is YPMDLGGRNF…WGQGFRLGDQ (62 aa). Position 201 is a phosphoserine (serine 201). Threonine 202 carries the phosphothreonine modification. Serine 226 bears the Phosphoserine mark. The disordered stretch occupies residues 229–251; it reads RAADQNGGGGRHNWGQGFRLGDQ. Residues 241–248 carry the SHP-box motif; sequence NWGQGFRL.

It belongs to the derlin family. In terms of assembly, homotetramer. The four subunits of the tetramer are arranged in a twofold symmetry. Forms homo- and heterooligomers with DERL2 and DERL3; binding to DERL3 is poorer than that between DERL2 and DERL3. Interacts (via SHP-box motif) with VCP. Interacts with AMFR, SELENOS, SEL1L, SELENOK and SYVN1, as well as with SEL1L-SYVN1 and VCP-SELENOS protein complexes; this interaction is weaker than that observed between DERL2 and these complexes. Interacts with NGLY1 and YOD1. Does not bind to EDEM1. Interacts with DNAJB9. Interacts with RNF103. Interacts with HM13. Interacts with XBP1 isoform 1 (via luminal/ectodomain domain); the interaction obviates the need for ectodomain shedding prior HM13/SPP-mediated XBP1 isoform 1 cleavage. Interacts with the signal recognition particle/SRP and the SRP receptor; in the process of endoplasmic reticulum stress-induced pre-emptive quality control. May interact with UBXN6. Interacts with ZFAND2B; probably through VCP. Interacts with CCDC47. Interacts with C18orf32. May interact with TRAM1. Forms a complex with SVIP and VCP/p97.

It localises to the endoplasmic reticulum membrane. Functional component of endoplasmic reticulum-associated degradation (ERAD) for misfolded lumenal proteins. Forms homotetramers which encircle a large channel traversing the endoplasmic reticulum (ER) membrane. This allows the retrotranslocation of misfolded proteins from the ER into the cytosol where they are ubiquitinated and degraded by the proteasome. The channel has a lateral gate within the membrane which provides direct access to membrane proteins with no need to reenter the ER lumen first. May mediate the interaction between VCP and the misfolded protein. Also involved in endoplasmic reticulum stress-induced pre-emptive quality control, a mechanism that selectively attenuates the translocation of newly synthesized proteins into the endoplasmic reticulum and reroutes them to the cytosol for proteasomal degradation. By controlling the steady-state expression of the IGF1R receptor, indirectly regulates the insulin-like growth factor receptor signaling pathway. This chain is Derlin-1, found in Bos taurus (Bovine).